The primary structure comprises 746 residues: 4-hydroxy-3-methylbut-2-en-1-yl diphosphate synthase (flavodoxin) (746 aa).

Residues Cys-653, Cys-656, Cys-687, and Glu-694 each contribute to the [4Fe-4S] cluster site.

The protein belongs to the IspG family. The cofactor is [4Fe-4S] cluster.

It catalyses the reaction (2E)-4-hydroxy-3-methylbut-2-enyl diphosphate + oxidized [flavodoxin] + H2O + 2 H(+) = 2-C-methyl-D-erythritol 2,4-cyclic diphosphate + reduced [flavodoxin]. It participates in isoprenoid biosynthesis; isopentenyl diphosphate biosynthesis via DXP pathway; isopentenyl diphosphate from 1-deoxy-D-xylulose 5-phosphate: step 5/6. Its function is as follows. Converts 2C-methyl-D-erythritol 2,4-cyclodiphosphate (ME-2,4cPP) into 1-hydroxy-2-methyl-2-(E)-butenyl 4-diphosphate. The chain is 4-hydroxy-3-methylbut-2-en-1-yl diphosphate synthase (flavodoxin) from Chlorobaculum tepidum (strain ATCC 49652 / DSM 12025 / NBRC 103806 / TLS) (Chlorobium tepidum).